A 369-amino-acid polypeptide reads, in one-letter code: 3,4-dihydroxy-2-butanone 4-phosphate synthase (369 aa).

Residues 1-201 (MAFDRIEDII…IADLIHYRLS (201 aa)) are DHBP synthase. D-ribulose 5-phosphate is bound by residues 27–28 (RE), aspartate 32, 140–144 (RAGHT), and glutamate 164. Residue glutamate 28 coordinates Mg(2+). Histidine 143 provides a ligand contact to Mg(2+). Residues 202–369 (TEHTIVRIGE…EVIESIPFPG (168 aa)) form a GTP cyclohydrolase II-like region.

This sequence in the N-terminal section; belongs to the DHBP synthase family. In the C-terminal section; belongs to the GTP cyclohydrolase II family. The cofactor is Mg(2+). Mn(2+) is required as a cofactor.

The enzyme catalyses D-ribulose 5-phosphate = (2S)-2-hydroxy-3-oxobutyl phosphate + formate + H(+). It functions in the pathway cofactor biosynthesis; riboflavin biosynthesis; 2-hydroxy-3-oxobutyl phosphate from D-ribulose 5-phosphate: step 1/1. Functionally, catalyzes the conversion of D-ribulose 5-phosphate to formate and 3,4-dihydroxy-2-butanone 4-phosphate. The protein is 3,4-dihydroxy-2-butanone 4-phosphate synthase (ribB) of Pseudomonas syringae pv. tomato (strain ATCC BAA-871 / DC3000).